Here is a 67-residue protein sequence, read N- to C-terminus: Ferredoxin (67 aa).

2 4Fe-4S ferredoxin-type domains span residues 3–31 (WKVSVDQDTCIGDAICASLCPDVFEMNDE) and 36–67 (PKVEVIEDEELYNCAKEAMEACPVSAITIEEA). The [4Fe-4S] cluster site is built by Cys-12, Asp-15, and Cys-18. Cysteines 22 and 49 form a disulfide. Cys-57 provides a ligand contact to [4Fe-4S] cluster.

In terms of assembly, homodimer. It depends on [4Fe-4S] cluster as a cofactor. [3Fe-4S] cluster serves as cofactor.

Functionally, ferredoxins are iron-sulfur proteins that transfer electrons in a wide variety of metabolic reactions. This is Ferredoxin (fdxA) from Pyrococcus furiosus (strain ATCC 43587 / DSM 3638 / JCM 8422 / Vc1).